A 614-amino-acid polypeptide reads, in one-letter code: Methionine--tRNA ligase (614 aa).

Positions 11–21 (PYTNGPRHIGH) match the 'HIGH' region motif. The Zn(2+) site is built by Cys143, Cys146, Cys156, and Cys159. Positions 359–363 (QFSTS) match the 'KMSKS' region motif. An ATP-binding site is contributed by Thr362.

It belongs to the class-I aminoacyl-tRNA synthetase family. MetG type 1 subfamily. Monomer. Requires Zn(2+) as cofactor.

Its subcellular location is the cytoplasm. The enzyme catalyses tRNA(Met) + L-methionine + ATP = L-methionyl-tRNA(Met) + AMP + diphosphate. Functionally, is required not only for elongation of protein synthesis but also for the initiation of all mRNA translation through initiator tRNA(fMet) aminoacylation. This chain is Methionine--tRNA ligase, found in Beutenbergia cavernae (strain ATCC BAA-8 / DSM 12333 / CCUG 43141 / JCM 11478 / NBRC 16432 / NCIMB 13614 / HKI 0122).